Here is a 308-residue protein sequence, read N- to C-terminus: Nodulation protein D 1 (308 aa).

The 58-residue stretch at 6–63 (LDLNLLVALDALMTERNLTAAARSINLSQPAMSAAVGRLRVYFEDELFTMNGRELVLT) folds into the HTH lysR-type domain. The segment at residues 23 to 42 (LTAAARSINLSQPAMSAAVG) is a DNA-binding region (H-T-H motif).

This sequence belongs to the LysR transcriptional regulatory family.

In terms of biological role, nodD regulates the expression of the nodABCFE genes which encode other nodulation proteins. NodD is also a negative regulator of its own expression. Binds flavonoids as inducers. The polypeptide is Nodulation protein D 1 (nodD1) (Rhizobium tropici).